We begin with the raw amino-acid sequence, 315 residues long: MDALLKEIEKLSQPSLQKENNDVCDLCFMQMKKISNYQLLCEECGQLKDWFEPEYNEKFTVYSRLKIVGANSSYHQRDLDKANSSDYSSLQFHHILEELKSLNVKYMDAGQKPFPIQVLKETAHSYNQVQQHRVIRSITKLQILASILRSICLKLNIACTVADAARFTQLNTKGISRGMDLLRSLFVDNKITLNVDLNPIDSFINSTYNALQIKQIHQELQEENVYNLKEIVKSFILYADEKNIGVDLNRRTVVIATMYNVLRRAYYPIEIDTVVYQCKIRKNTITRALKMYEDYYSHFKSLYEQYHLNAAKKLI.

Belongs to the asfivirus C315R family.

In terms of biological role, putative initation factor. In Ornithodoros (relapsing fever ticks), this protein is Initiation factor TFIIB homolog.